Here is a 283-residue protein sequence, read N- to C-terminus: Protoheme IX farnesyltransferase 1 (283 aa).

9 consecutive transmembrane segments (helical) span residues 14-34, 35-55, 84-104, 107-127, 133-153, 163-183, 208-228, 231-251, and 258-278; these read IALMIALTAITGYGAVATKVD, PVALLLLTLAMILGSAASAVF, LGFALAVVLMVAGMALANAAF, VVALHLFLGGFVYVAIYTVWL, TNIIIGGAAGSFAVLAGAAAV, VLALVLFLWTPSHFWSLAILL, ILANTVILVGASLLPWGLGLL, VYGFVAAVSGAVLLGFNVVLV, and WAGWNFAASMPYLLLLFIAVF.

It belongs to the UbiA prenyltransferase family. Protoheme IX farnesyltransferase subfamily.

Its subcellular location is the cell inner membrane. It catalyses the reaction heme b + (2E,6E)-farnesyl diphosphate + H2O = Fe(II)-heme o + diphosphate. Its pathway is porphyrin-containing compound metabolism; heme O biosynthesis; heme O from protoheme: step 1/1. Functionally, converts heme B (protoheme IX) to heme O by substitution of the vinyl group on carbon 2 of heme B porphyrin ring with a hydroxyethyl farnesyl side group. In Paramagnetospirillum magneticum (strain ATCC 700264 / AMB-1) (Magnetospirillum magneticum), this protein is Protoheme IX farnesyltransferase 1.